The chain runs to 1453 residues: Collagen alpha-1(I) chain (1453 aa).

The N-terminal stretch at 1 to 22 (MFSFVDLRLLLLLGATALLTHG) is a signal peptide. The propeptide at 23–151 (QEDIPEVSCI…PPGLGGNFAS (129 aa)) is N-terminal propeptide. In terms of domain architecture, VWFC spans 29 to 87 (VSCIHNGLRVPNGETWKPEVCLICICHNGTAVCDDVQCNEELDCPNPQRREGECCAFCP). N56 carries an N-linked (GlcNAc...) asparagine glycan. The tract at residues 94 to 1210 (NSEDVGVEGP…GGRYYRADDA (1117 aa)) is disordered. Pro residues-rich tracts occupy residues 109–118 (PQGPRGPVGP) and 128–143 (PGLP…PGPP). The segment at 152-167 (QMSYGYDEKSAGVSVP) is nonhelical region (N-terminal). Position 160 is an allysine (K160). A Phosphoserine modification is found at S161. Residues 168–1181 (GPMGPSGPRG…PGPPGPPGPP (1014 aa)) are triple-helical region. 11 positions are modified to 4-hydroxyproline: P179, P182, P185, P194, P197, P200, P215, P230, P236, P245, and P251. Positions 198-207 (GEPGGSGPMG) are enriched in gly residues. The span at 218–232 (NGDDGEAGKPGRPGE) shows a compositional bias: basic and acidic residues. K254 is modified (5-hydroxylysine; alternate). A glycan (O-linked (Gal...) hydroxylysine; alternate) is linked at K254. S260 bears the Phosphoserine mark. Residues 268–284 (DAGPAGPKGEPGSPGEN) are compositionally biased toward low complexity. 5 positions are modified to 4-hydroxyproline: P278, P281, P287, P296, and P302. The span at 307-320 (TAGARGNDGAVGAA) shows a compositional bias: low complexity. Positions 322 to 334 (PPGPTGPTGPPGF) are enriched in pro residues. Residues P323, P332, P335, P362, P365, P377, P383, P392, P398, P401, and P416 each carry the 4-hydroxyproline modification. Residues 368–407 (AGAAGPAGNPGADGQPGAKGANGAPGIAGAPGFPGARGPS) show a composition bias toward low complexity. K419 carries the post-translational modification 5-hydroxylysine. 4-hydroxyproline is present on residues P425, P428, P440, P449, P464, P470, P479, and P485. Residues 474–483 (GERGGPGSRG) are compositionally biased toward gly residues. K494 carries the post-translational modification 5-hydroxylysine. Residues 499 to 515 (ERGAPGPAGPKGSPGEA) are compositionally biased toward low complexity. 4-hydroxyproline occurs at positions 503, 512, 518, 524, 533, 536, 545, 554, 560, 572, 581, 590, 593, 611, 629, 635, 641, 647, 653, 659, 671, 680, 692, 704, 707, 713, 719, and 728. The span at 527–566 (KGLTGSPGSPGPDGKTGPPGPAGQDGRPGPAGPPGARGQA) shows a compositional bias: low complexity. The segment covering 623-650 (QGPAGSPGFQGLPGPAGPPGEAGKPGEQ) has biased composition (low complexity). Low complexity-rich tracts occupy residues 685-695 (PRGNNGAPGND) and 703-716 (APGA…PGLQ). The Cell attachment site motif lies at 734–736 (RGD). K740 carries the post-translational modification 5-hydroxylysine. P746, P761, and P767 each carry 4-hydroxyproline. At S776 the chain carries Phosphoserine. 7 positions are modified to 4-hydroxyproline: P788, P797, P806, P812, P830, P839, and P848. Over residues 800-815 (AGFAGPPGADGQPGAK) the composition is skewed to low complexity. Residues 829–841 (PPGPAGPAGPPGP) show a composition bias toward pro residues. Low complexity predominate over residues 842–872 (IGNVGAPGPKGPRGAAGPPGATGFPGAAGRV). Position 851 is a 5-hydroxylysine (K851). 4-hydroxyproline occurs at positions 860 and 866. P874 is modified (3-hydroxyproline). 4-hydroxyproline is present on residues P875, P884, P887, P908, P917, P926, P935, P953, P962, P965, P971, P986, P992, P998, P1007, and P1013. A compositionally biased stretch (low complexity) spans 901 to 910 (ETGPAGRPGE). Residues 920–935 (AGEKGSPGADGPAGSP) are compositionally biased toward low complexity. Pro residues predominate over residues 985 to 995 (PPGPMGPPGLA). The span at 997–1012 (PPGESGREGSPGAEGS) shows a compositional bias: low complexity. The residue at position 1022 (K1022) is a 5-hydroxylysine. Residues 1031 to 1046 (AGPPGAPGAPGAPGPV) show a composition bias toward pro residues. 4-hydroxyproline occurs at positions 1034, 1037, and 1040. Over residues 1067 to 1081 (IGPAGARGPAGPQGP) the composition is skewed to low complexity. Positions 1082 to 1084 (RGD) match the Cell attachment site motif. Over residues 1082–1096 (RGDKGETGEQGDRGI) the composition is skewed to basic and acidic residues. The residue at position 1085 (K1085) is a 5-hydroxylysine. Residue K1097 is modified to 5-hydroxylysine; alternate. An O-linked (Gal...) hydroxylysine; alternate glycan is attached at K1097. The segment covering 1102-1148 (FSGLQGPPGSPGSPGEQGPSGASGPAGPRGPPGSAGSPGKDGLNGLP) has biased composition (low complexity). A 4-hydroxyproline mark is found at P1109, P1112, P1115, P1133, and P1148. The residue at position 1153 (P1153) is a 3-hydroxyproline. Position 1154 is a 4-hydroxyproline (P1154). A compositionally biased stretch (pro residues) spans 1166–1181 (AGPPGPPGPPGPPGPP). P1168 is modified (3-hydroxyproline). At P1169 the chain carries 4-hydroxyproline. Residue P1171 is modified to 3-hydroxyproline. P1172 carries the 4-hydroxyproline modification. P1174 is subject to 3-hydroxyproline. A 4-hydroxyproline mark is found at P1175, P1178, and P1181. Positions 1182–1207 (SGGYDFSFLPQPPQEKSQDGGRYYRA) are nonhelical region (C-terminal). K1197 is modified (allysine). The span at 1197-1210 (KSQDGGRYYRADDA) shows a compositional bias: basic and acidic residues. Positions 1208-1453 (DDANVVRDRD…GLDIGPACFV (246 aa)) are cleaved as a propeptide — C-terminal propeptide. The Fibrillar collagen NC1 domain occupies 1218–1453 (LEVDTTLKSL…GLDIGPACFV (236 aa)). Intrachain disulfides connect C1248–C1280, C1288–C1451, and C1359–C1404. Ca(2+) is bound by residues D1266, N1268, Q1269, C1271, and D1274. The N-linked (GlcNAc...) asparagine glycan is linked to N1354.

The protein belongs to the fibrillar collagen family. In terms of assembly, trimers of one alpha 2(I) and two alpha 1(I) chains. Interacts with MRC2. Interacts with TRAM2. Interacts with MFAP4 in a Ca (2+)-dependent manner. Post-translationally, contains mostly 4-hydroxyproline. Proline residues at the third position of the tripeptide repeating unit (G-X-Y) are hydroxylated in some or all of the chains. In terms of processing, contains 3-hydroxyproline at a few sites. This modification occurs on the first proline residue in the sequence motif Gly-Pro-Hyp, where Hyp is 4-hydroxyproline. Lysine residues at the third position of the tripeptide repeating unit (G-X-Y) are 5-hydroxylated in some or all of the chains. Post-translationally, O-glycosylated on hydroxylated lysine residues. The O-linked glycan consists of a Glc-Gal disaccharide. Forms the fibrils of tendon, ligaments and bones. In bones the fibrils are mineralized with calcium hydroxyapatite.

The protein localises to the secreted. It is found in the extracellular space. It localises to the extracellular matrix. Type I collagen is a member of group I collagen (fibrillar forming collagen). The chain is Collagen alpha-1(I) chain from Mus musculus (Mouse).